The sequence spans 208 residues: Putative chemokine-related protein FP248 (208 aa).

Residues 1–23 (MGTGGSLLCGCSLVLSCLCPSAS) form the signal peptide. Residue N29 is glycosylated (N-linked (GlcNAc...) asparagine).

The protein localises to the secreted. The polypeptide is Putative chemokine-related protein FP248 (Homo sapiens (Human)).